Reading from the N-terminus, the 230-residue chain is MSKYAAAPSPYSHQPQTPEHKSKTLVVGLTGGIGSGKSAASDWFAQQGIDIIDADVIAHEVVVKGSSTLRKIQRKFGDWVLNANGDMDRAAVRTHVFTYPDALIELEAITHPAIREAAKKQLAESTSPYVVLSAPLLIEAAEAGLANLCQRILVMDATENTQLARASQRDALSVQKIEAIMVNQLSREERNRHADDVVLNESDLAALYVQLEPLHQDYLKLAQQLKFAAD.

Residues 1–21 (MSKYAAAPSPYSHQPQTPEHK) are disordered. The 200-residue stretch at 26–225 (VVGLTGGIGS…QDYLKLAQQL (200 aa)) folds into the DPCK domain. 34 to 39 (GSGKSA) serves as a coordination point for ATP.

Belongs to the CoaE family.

The protein localises to the cytoplasm. It catalyses the reaction 3'-dephospho-CoA + ATP = ADP + CoA + H(+). It participates in cofactor biosynthesis; coenzyme A biosynthesis; CoA from (R)-pantothenate: step 5/5. Catalyzes the phosphorylation of the 3'-hydroxyl group of dephosphocoenzyme A to form coenzyme A. This Psychrobacter cryohalolentis (strain ATCC BAA-1226 / DSM 17306 / VKM B-2378 / K5) protein is Dephospho-CoA kinase.